A 150-amino-acid polypeptide reads, in one-letter code: Cytosine deaminase (150 aa).

One can recognise a CMP/dCMP-type deaminase domain in the interval 3 to 121; the sequence is FDDKKGLQVA…KLLIENGVEV (119 aa). Asn-44 contacts substrate. Residue His-55 participates in Zn(2+) binding. Glu-57 acts as the Proton donor in catalysis. 2 residues coordinate Zn(2+): Cys-84 and Cys-87. Residue Asp-147 participates in substrate binding.

Belongs to the cytidine and deoxycytidylate deaminase family. Homodimer. The cofactor is Zn(2+).

It localises to the cytoplasm. The protein resides in the nucleus. It catalyses the reaction cytosine + H2O + H(+) = uracil + NH4(+). Its pathway is pyrimidine metabolism; UMP biosynthesis via salvage pathway; uracil from cytosine: step 1/1. Its function is as follows. Catalyzes the hydrolytic deamination of cytosine to uracil or 5-methylcytosine to thymine. Is involved in the pyrimidine salvage pathway, which allows the cell to utilize cytosine for pyrimidine nucleotide synthesis. The protein is Cytosine deaminase of Candida albicans (strain SC5314 / ATCC MYA-2876) (Yeast).